We begin with the raw amino-acid sequence, 222 residues long: Neurotrophic factor BDNF precursor form (222 aa).

Residues 1 to 4 (CMKA) form the signal peptide. The propeptide occupies 5-113 (APMKEVSVRG…AANMSMRVRR (109 aa)). N-linked (GlcNAc...) asparagine glycosylation is present at N106. 2 disulfide bridges follow: C126-C193 and C171-C222.

Belongs to the NGF-beta family.

The protein resides in the secreted. Its function is as follows. Promotes the survival of neuronal populations that are all located either in the central nervous system or directly connected to it. This Xenopeltis unicolor (Sunbeam snake) protein is Neurotrophic factor BDNF precursor form (BDNF).